The following is a 195-amino-acid chain: FMN-dependent NADH:quinone oxidoreductase (195 aa).

FMN-binding positions include S9, 15 to 17 (SVS), 85 to 88 (MYNF), and 129 to 132 (SRGG).

This sequence belongs to the azoreductase type 1 family. As to quaternary structure, homodimer. It depends on FMN as a cofactor.

It catalyses the reaction 2 a quinone + NADH + H(+) = 2 a 1,4-benzosemiquinone + NAD(+). It carries out the reaction N,N-dimethyl-1,4-phenylenediamine + anthranilate + 2 NAD(+) = 2-(4-dimethylaminophenyl)diazenylbenzoate + 2 NADH + 2 H(+). In terms of biological role, quinone reductase that provides resistance to thiol-specific stress caused by electrophilic quinones. Functionally, also exhibits azoreductase activity. Catalyzes the reductive cleavage of the azo bond in aromatic azo compounds to the corresponding amines. This chain is FMN-dependent NADH:quinone oxidoreductase, found in Stenotrophomonas maltophilia (strain K279a).